Reading from the N-terminus, the 132-residue chain is MTMTDPIADMLTRIRNGNMAKHETIDIPASNMKKEIANILLEEGFIKGFDVIEDGKQGIIRMQLKYGKNKEKVITGIKKISKPGLRVYAKKDEIPRVLGGLGIAIISTSRGIITDKVARKEGVGGEVIAYIW.

This sequence belongs to the universal ribosomal protein uS8 family. Part of the 30S ribosomal subunit. Contacts proteins S5 and S12.

In terms of biological role, one of the primary rRNA binding proteins, it binds directly to 16S rRNA central domain where it helps coordinate assembly of the platform of the 30S subunit. This Alkaliphilus oremlandii (strain OhILAs) (Clostridium oremlandii (strain OhILAs)) protein is Small ribosomal subunit protein uS8.